The chain runs to 442 residues: Inner membrane protein PPF-1, chloroplastic (442 aa).

Residues 1 to 108 (MAKTLISSPS…EFVLKVLKDG (108 aa)) are Lumenal-facing. Residues 109–129 (LSSVHVPYSYGFAIILLTVIV) traverse the membrane as a helical segment. Topologically, residues 130–183 (KAATLPLTKQQVESTLAMQNLQPKIKAIQERYAGNQERIQLETSRLYTQAGVNP) are stromal. Residues 184–204 (LAGCLPTLATIPVWIGLYQAL) form a helical membrane-spanning segment. At 205-296 (SNVANEGLLT…QKNTLLIFKF (92 aa)) the chain is on the lumenal side. A helical membrane pass occupies residues 297–317 (LPLMIGYFSLSVPSGLTIYWF). Over 318 to 442 (TNNVLSTAQQ…SKRSKRKPVA (125 aa)) the chain is Stromal. 2 disordered regions span residues 350 to 371 (AGQA…RQLK) and 390 to 442 (PLAS…KPVA). The segment covering 358 to 371 (SKPEKGGERFRQLK) has biased composition (basic and acidic residues). A compositionally biased stretch (polar residues) spans 414–427 (ESNTSKVSQEVQSF). The span at 431–442 (RRSKRSKRKPVA) shows a compositional bias: basic residues.

The protein belongs to the OXA1/ALB3/YidC (TC 2.A.9.2) family. Highly expressed in apical buds. Low levels of expression in leaves. Not expressed in roots, and stems.

Its subcellular location is the plastid. It is found in the chloroplast thylakoid membrane. In terms of biological role, may be required for the insertion of some integral membrane proteins into the chloroplast thylakoid membrane. May play a role in inhibiting senescence. The protein is Inner membrane protein PPF-1, chloroplastic (PPF-1) of Pisum sativum (Garden pea).